We begin with the raw amino-acid sequence, 71 residues long: Non-disulfide-bridged peptide 5.5 (71 aa).

The signal sequence occupies residues 1 to 23; that stretch reads MKTQFIVLIVAIVFLQLLSQSEA. The residue at position 36 (Leu36) is a Leucine amide. Residues 40–71 constitute a propeptide that is removed on maturation; it reads DLRHLDLDQFDDMFDQPEISAADMKFLQDLLR.

It belongs to the non-disulfide-bridged peptide (NDBP) superfamily. Short antimicrobial peptide (group 4) family. In terms of tissue distribution, expressed by the venom gland.

It localises to the secreted. It is found in the target cell membrane. In terms of biological role, antimicrobial peptide. Is active on Mycobacterium abscessus subsp. massiliense (MBC=200 uM), a rapidly growing and emerging pathogen associated with healthcare infections. Also shows antifungal activities. Has a weak hemolytic activity on human erythrocytes (10% at 610 uM), indicating a low toxicity (therapeutic index (TI)=3.05). In addition, treatment of infected macrophages reduces the bacterial load. In vivo, treatment of M.abscessus-infected mice causes a decrease in the bacterial load in the lungs and liver. The chain is Non-disulfide-bridged peptide 5.5 from Hoffmannihadrurus gertschi (Scorpion).